The sequence spans 166 residues: Small ribosomal subunit protein bS6 (166 aa).

2 stretches are compositionally biased toward basic and acidic residues: residues 96 to 142 and 149 to 166; these read HEEG…DRPP and GGDR…GGAE. The disordered stretch occupies residues 96–166; sequence HEEGPSAMMQ…PREGFEGGAE (71 aa).

Belongs to the bacterial ribosomal protein bS6 family.

In terms of biological role, binds together with bS18 to 16S ribosomal RNA. The protein is Small ribosomal subunit protein bS6 of Mesorhizobium japonicum (strain LMG 29417 / CECT 9101 / MAFF 303099) (Mesorhizobium loti (strain MAFF 303099)).